The sequence spans 91 residues: Ice-structuring protein (91 aa).

The N-terminal stretch at 1–21 (MALSLFTVGQLIFLFWTMRIT) is a signal peptide. Positions 22-39 (EANPDPAAKAVPAAAAPD) are cleaved as a propeptide — removed by a dipeptidylpeptidase.

The protein belongs to the type-I AFP family.

The protein resides in the secreted. Contributes to protect fish blood from freezing at subzero sea water temperatures. Lowers the blood freezing point. Binds to nascent ice crystals and prevents further growth. This chain is Ice-structuring protein, found in Pseudopleuronectes americanus (Winter flounder).